The sequence spans 423 residues: Torsin-4A (423 aa).

The interval 47-68 is disordered; sequence PGGGPDVGTGAPRPGCSPRAPR. Phosphoserine is present on residues serine 63 and serine 81. Threonine 89 is modified (phosphothreonine). A Phosphoserine modification is found at serine 106. Residues 122–138 form a helical membrane-spanning segment; it reads CLLLLVAIVGFQVLNAI. Residue 194–201 participates in ATP binding; that stretch reads GPSGVGKS.

The protein belongs to the ClpA/ClpB family. Torsin subfamily.

It localises to the membrane. This is Torsin-4A (TOR4A) from Homo sapiens (Human).